The chain runs to 143 residues: Large ribosomal subunit protein uL11 (143 aa).

This sequence belongs to the universal ribosomal protein uL11 family. Part of the ribosomal stalk of the 50S ribosomal subunit. Interacts with L10 and the large rRNA to form the base of the stalk. L10 forms an elongated spine to which L12 dimers bind in a sequential fashion forming a multimeric L10(L12)X complex. One or more lysine residues are methylated.

Functionally, forms part of the ribosomal stalk which helps the ribosome interact with GTP-bound translation factors. The chain is Large ribosomal subunit protein uL11 from Dechloromonas aromatica (strain RCB).